A 436-amino-acid polypeptide reads, in one-letter code: uncharacterized protein (436 aa).

Residues 1 to 20 (MKCAVAILLVCLTLQQAAYG) form the signal peptide. 3 coiled-coil regions span residues 25-87 (EEVK…ALRN), 154-207 (MRKT…NSVE), and 247-329 (ESWG…ASLL). The segment covering 371 to 390 (EEEIAPSTEEDGSEELEADS) has biased composition (acidic residues). The interval 371–419 (EEEIAPSTEEDGSEELEADSYDSKVGGESPISQRTEERQGAEERSRLRR) is disordered. A compositionally biased stretch (basic and acidic residues) spans 404-415 (RTEERQGAEERS).

Component of the acid-insoluble organic matrix of the aragonitic skeleton (at protein level).

It localises to the secreted. This is an uncharacterized protein from Acropora millepora (Staghorn coral).